The sequence spans 226 residues: 2-C-methyl-D-erythritol 4-phosphate cytidylyltransferase (226 aa).

This sequence belongs to the IspD/TarI cytidylyltransferase family. IspD subfamily.

The enzyme catalyses 2-C-methyl-D-erythritol 4-phosphate + CTP + H(+) = 4-CDP-2-C-methyl-D-erythritol + diphosphate. It participates in isoprenoid biosynthesis; isopentenyl diphosphate biosynthesis via DXP pathway; isopentenyl diphosphate from 1-deoxy-D-xylulose 5-phosphate: step 2/6. Catalyzes the formation of 4-diphosphocytidyl-2-C-methyl-D-erythritol from CTP and 2-C-methyl-D-erythritol 4-phosphate (MEP). This is 2-C-methyl-D-erythritol 4-phosphate cytidylyltransferase from Haemophilus ducreyi (strain 35000HP / ATCC 700724).